A 372-amino-acid polypeptide reads, in one-letter code: Protein phosphatase Mn(2+)-dependent 1K (372 aa).

Residues 1 to 29 (MSTAALLTLVRSGGNQVRRRVLLRARGLQ) constitute a mitochondrion transit peptide. Positions 46–61 (KWSRFDPDGSGRPATW) are critical for association with the BCKDH complex. The PPM-type phosphatase domain maps to 94 to 346 (NVGSASQIGK…DNTTAVVVPF (253 aa)). Residues Asp127 and Gly128 each coordinate Mn(2+). Phosphoserine is present on Ser248. Mn(2+) is bound by residues Asp298 and Asp337.

Belongs to the PP2C family. Monomer. Interacts with E1 and E2 components of the branched-chain alpha-ketoacid dehydrogenase (BCKDH) complex; this interaction requires colocalization in mitochondria. Interacts with BCKDHA but not with BCKDHB of the E1 component. Interacts with the 24-meric E2 core composed of DBT monomers with a 24:1 stoichiometry; the N-terminal region (residues 49-61) of PPM1K and C-terminal linker of the lipoyl domain of DBT (residues 145-160) are critical for this interaction, whereas the lipoyl prosthetic group is dispensable. Competes with BCKDK for binding to the E2 core; this interaction is modulated by branched-chain alpha-keto acids. At steady state, BCKDH holoenzyme preferentially binds BCKDK and BCKDHA is phosphorylated. In response to high levels of branched-chain alpha-keto acids, the inhibitory BCKDK is replaced by activating PPM1K leading to BCKDHA dephosphorylation and BCAA degradation. The cofactor is Mn(2+).

It is found in the mitochondrion matrix. It catalyses the reaction O-phospho-L-seryl-[3-methyl-2-oxobutanoate dehydrogenase] + H2O = L-seryl-[3-methyl-2-oxobutanoate dehydrogenase] + phosphate. It carries out the reaction O-phospho-L-seryl-[protein] + H2O = L-seryl-[protein] + phosphate. The protein operates within protein modification. Its function is as follows. Serine/threonine-protein phosphatase component of macronutrients metabolism. Forms a functional kinase and phosphatase pair with BCKDK, serving as a metabolic regulatory node that coordinates branched-chain amino acids (BCAAs) with glucose and lipid metabolism via two distinct phosphoprotein targets: mitochondrial BCKDHA subunit of the branched-chain alpha-ketoacid dehydrogenase (BCKDH) complex and cytosolic ACLY, a lipogenic enzyme of Krebs cycle. At high levels of branched-chain ketoacids, dephosphorylates and activates mitochondrial BCKDH complex, a multisubunit complex consisting of three multimeric components each involved in different steps of BCAA catabolism: E1 composed of BCKDHA and BCKDHB, E2 core composed of DBT monomers, and E3 composed of DLD monomers. Tightly associates with the E2 component of BCKDH complex and dephosphorylates BCKDHA on Ser-347. Regulates the reversible phosphorylation of ACLY in response to changes in cellular carbohydrate abundance such as occurs during fasting to feeding metabolic transition. At fasting state, appears to dephosphorylate ACLY on Ser-455 and inactivate it. Refeeding stimulates MLXIPL/ChREBP transcription factor, leading to increased BCKDK to PPM1K expression ratio, phosphorylation and activation of ACLY that ultimately results in the generation of malonyl-CoA and oxaloacetate immediate substrates of de novo lipogenesis and gluconeogenesis, respectively. Recognizes phosphosites having SxS or RxxS motifs and strictly depends on Mn(2+) ions for the phosphatase activity. Regulates Ca(2+)-induced opening of mitochondrial transition pore and apoptotic cell death. In Bos taurus (Bovine), this protein is Protein phosphatase Mn(2+)-dependent 1K (PPM1K).